A 400-amino-acid chain; its full sequence is Cell division protein FtsZ 2 (400 aa).

The span at 1 to 16 shows a compositional bias: basic and acidic residues; that stretch reads MQDIVREAMERDEAER. A disordered region spans residues 1-30; sequence MQDIVREAMERDEAERQTQSSLEDSDDQFG. GTP is bound by residues 41–45, 128–130, glutamate 159, arginine 162, and aspartate 205; these read GAGNN and GTG. The tract at residues 338 to 400 is disordered; that stretch reads VLGPSTQKQA…EKNNGLDVIR (63 aa). The segment covering 352–364 has biased composition (low complexity); it reads QSIQSRESQQQHS. The segment covering 365-382 has biased composition (polar residues); that stretch reads GSEFDSSERAQTAQSGTW. The span at 385-400 shows a compositional bias: basic and acidic residues; sequence GGRDEVEKNNGLDVIR.

Belongs to the FtsZ family. In terms of assembly, homodimer. Polymerizes to form a dynamic ring structure in a strictly GTP-dependent manner. Interacts directly with several other division proteins. Interacts with SepF.

The protein localises to the cytoplasm. Essential cell division protein that forms a contractile ring structure (Z ring) at the future cell division site. The regulation of the ring assembly controls the timing and the location of cell division. One of the functions of the FtsZ ring is to recruit other cell division proteins to the septum to produce a new cell wall between the dividing cells. Binds GTP and shows GTPase activity. Required for division ring constriction. The polypeptide is Cell division protein FtsZ 2 (Haloferax volcanii (strain ATCC 29605 / DSM 3757 / JCM 8879 / NBRC 14742 / NCIMB 2012 / VKM B-1768 / DS2) (Halobacterium volcanii)).